The primary structure comprises 363 residues: Chorismate synthase (363 aa).

NADP(+)-binding residues include Arg48 and Arg54. Residues 125-127 (RSS), 237-238 (NA), Gly277, 292-296 (KPTSS), and Arg318 each bind FMN.

Belongs to the chorismate synthase family. Homotetramer. It depends on FMNH2 as a cofactor.

It carries out the reaction 5-O-(1-carboxyvinyl)-3-phosphoshikimate = chorismate + phosphate. It participates in metabolic intermediate biosynthesis; chorismate biosynthesis; chorismate from D-erythrose 4-phosphate and phosphoenolpyruvate: step 7/7. Functionally, catalyzes the anti-1,4-elimination of the C-3 phosphate and the C-6 proR hydrogen from 5-enolpyruvylshikimate-3-phosphate (EPSP) to yield chorismate, which is the branch point compound that serves as the starting substrate for the three terminal pathways of aromatic amino acid biosynthesis. This reaction introduces a second double bond into the aromatic ring system. The sequence is that of Chorismate synthase from Pseudomonas putida (strain W619).